Consider the following 653-residue polypeptide: Acetyl-coenzyme A synthetase (653 aa).

CoA is bound by residues 196-199 and Thr315; that span reads RGGK. ATP contacts are provided by residues 391-393, 415-420, Asp506, and Arg521; these read GEP and DTWWQT. Ser529 contributes to the CoA binding site. Arg532 contacts ATP. Mg(2+)-binding residues include Val543 and Val548. N6-acetyllysine is present on Lys618.

The protein belongs to the ATP-dependent AMP-binding enzyme family. Mg(2+) serves as cofactor. Acetylated. Deacetylation by the SIR2-homolog deacetylase activates the enzyme.

The catalysed reaction is acetate + ATP + CoA = acetyl-CoA + AMP + diphosphate. Functionally, catalyzes the conversion of acetate into acetyl-CoA (AcCoA), an essential intermediate at the junction of anabolic and catabolic pathways. AcsA undergoes a two-step reaction. In the first half reaction, AcsA combines acetate with ATP to form acetyl-adenylate (AcAMP) intermediate. In the second half reaction, it can then transfer the acetyl group from AcAMP to the sulfhydryl group of CoA, forming the product AcCoA. This is Acetyl-coenzyme A synthetase from Laribacter hongkongensis (strain HLHK9).